Here is a 470-residue protein sequence, read N- to C-terminus: Cysteine--tRNA ligase (470 aa).

Zn(2+) is bound at residue C29. The 'HIGH' region motif lies at 31–41 (PTVYNYAHIGN). Zn(2+)-binding residues include C211, H236, and E240. A 'KMSKS' region motif is present at residues 273 to 277 (KMSKS). K276 provides a ligand contact to ATP.

It belongs to the class-I aminoacyl-tRNA synthetase family. As to quaternary structure, monomer. Zn(2+) is required as a cofactor.

It localises to the cytoplasm. It carries out the reaction tRNA(Cys) + L-cysteine + ATP = L-cysteinyl-tRNA(Cys) + AMP + diphosphate. This Phenylobacterium zucineum (strain HLK1) protein is Cysteine--tRNA ligase.